A 446-amino-acid chain; its full sequence is Tubulin beta-2 chain (446 aa).

The GTP site is built by Gln-11, Glu-69, Ser-138, Gly-142, Thr-143, Gly-144, Asn-204, and Asn-226. Glu-69 serves as a coordination point for Mg(2+). A disordered region spans residues 424 to 446 (QYQEATADEEGEFDEDEEGGGDE). The span at 429–446 (TADEEGEFDEDEEGGGDE) shows a compositional bias: acidic residues.

The protein belongs to the tubulin family. In terms of assembly, dimer of alpha and beta chains. A typical microtubule is a hollow water-filled tube with an outer diameter of 25 nm and an inner diameter of 15 nM. Alpha-beta heterodimers associate head-to-tail to form protofilaments running lengthwise along the microtubule wall with the beta-tubulin subunit facing the microtubule plus end conferring a structural polarity. Microtubules usually have 13 protofilaments but different protofilament numbers can be found in some organisms and specialized cells. It depends on Mg(2+) as a cofactor. Testis specific.

Its subcellular location is the cytoplasm. It localises to the cytoskeleton. In terms of biological role, tubulin is the major constituent of microtubules, a cylinder consisting of laterally associated linear protofilaments composed of alpha- and beta-tubulin heterodimers. Microtubules grow by the addition of GTP-tubulin dimers to the microtubule end, where a stabilizing cap forms. Below the cap, tubulin dimers are in GDP-bound state, owing to GTPase activity of alpha-tubulin. The sequence is that of Tubulin beta-2 chain (betaTub85D) from Drosophila melanogaster (Fruit fly).